A 685-amino-acid polypeptide reads, in one-letter code: Pentatricopeptide repeat-containing protein At5g19020, mitochondrial (685 aa).

The N-terminal 23 residues, 1 to 23 (MIKLIRFFRSRRCWVISLQARCF), are a transit peptide targeting the mitochondrion. 17 PPR repeats span residues 40–74 (TERA…GLDS), 75–105 (NGYI…HAKL), 106–136 (DSAS…MPER), 137–171 (SCVS…GIML), 172–206 (NEVT…KLEG), 207–237 (RVFV…MPER), 238–268 (NLVT…ITEK), 269–303 (DIVS…GMKP), 304–338 (SEVM…GFDC), 339–369 (YDFL…SVKD), 370–400 (HIAS…THDK), 401–435 (DIFS…SQVK), 437–471 (DAIT…TIPP), 472–502 (NDNL…TKNI), 506–540 (TISP…PIKP), 541–576 (NSIT…GIEP), and 577–607 (DIKH…MPVK). The interval 612-685 (IWGMLLSASR…EWSRAFSGVV (74 aa)) is type E motif; degenerate.

This sequence belongs to the PPR family. PCMP-E subfamily.

Its subcellular location is the mitochondrion. In Arabidopsis thaliana (Mouse-ear cress), this protein is Pentatricopeptide repeat-containing protein At5g19020, mitochondrial (PCMP-E42).